A 1486-amino-acid chain; its full sequence is Chromosome partition protein MukB (1486 aa).

An ATP-binding site is contributed by 34 to 41; sequence GGNGAGKS. 3 coiled-coil regions span residues 334 to 418, 444 to 480, and 509 to 603; these read SDHL…QYNQ, LETF…QAYQ, and RHLA…RAPV. The segment at 666 to 783 is flexible hinge; the sequence is PGGSEDQRLN…EVPLFGRAAR (118 aa). 3 coiled-coil regions span residues 835 to 923, 977 to 1115, and 1209 to 1266; these read EAEI…AKLE, EMLS…TAKA, and VEAI…QNVS.

It belongs to the SMC family. MukB subfamily. Homodimerization via its hinge domain. Binds to DNA via its C-terminal region. Interacts, and probably forms a ternary complex, with MukE and MukF via its C-terminal region. The complex formation is stimulated by calcium or magnesium. Interacts with tubulin-related protein FtsZ.

It is found in the cytoplasm. The protein localises to the nucleoid. Its function is as follows. Plays a central role in chromosome condensation, segregation and cell cycle progression. Functions as a homodimer, which is essential for chromosome partition. Involved in negative DNA supercoiling in vivo, and by this means organize and compact chromosomes. May achieve or facilitate chromosome segregation by condensation DNA from both sides of a centrally located replisome during cell division. The protein is Chromosome partition protein MukB of Shigella sonnei (strain Ss046).